Here is a 702-residue protein sequence, read N- to C-terminus: DNA ligase (702 aa).

NAD(+) contacts are provided by residues 32–36 (DAEYD) and 81–82 (SL). The disordered stretch occupies residues 104–125 (AESSAQKASLNPLVRDSDQKNR). Glu139 is an NAD(+) binding site. Residue Lys141 is the N6-AMP-lysine intermediate of the active site. Positions 162, 199, 316, and 340 each coordinate NAD(+). Zn(2+)-binding residues include Cys434, Cys437, Cys452, and Cys458. Positions 616-702 (KPNHPFRDKT…KALKPEGTKV (87 aa)) constitute a BRCT domain.

It belongs to the NAD-dependent DNA ligase family. LigA subfamily. Mg(2+) serves as cofactor. It depends on Mn(2+) as a cofactor.

The enzyme catalyses NAD(+) + (deoxyribonucleotide)n-3'-hydroxyl + 5'-phospho-(deoxyribonucleotide)m = (deoxyribonucleotide)n+m + AMP + beta-nicotinamide D-nucleotide.. In terms of biological role, DNA ligase that catalyzes the formation of phosphodiester linkages between 5'-phosphoryl and 3'-hydroxyl groups in double-stranded DNA using NAD as a coenzyme and as the energy source for the reaction. It is essential for DNA replication and repair of damaged DNA. In Hamiltonella defensa subsp. Acyrthosiphon pisum (strain 5AT), this protein is DNA ligase.